The primary structure comprises 361 residues: NAD-dependent protein deacetylase hst2-1 (361 aa).

One can recognise a Deacetylase sirtuin-type domain in the interval 16 to 276 (SVLEARTVEA…RKLARALGWE (261 aa)). NAD(+)-binding positions include 43 to 63 (GAGI…TGIY) and 126 to 129 (QNID). H146 serves as the catalytic Proton acceptor. Zn(2+) is bound by residues C154, C157, C178, and C181. NAD(+) is bound by residues 217–219 (GTS), 242–244 (NRE), and C262. Residues 294-328 (EEELATPRTREERLENEISRLTAEIDKTLKISDAY) adopt a coiled-coil conformation. The interval 335-361 (RLEGEPLSSPESNGTGLAHVFPHLARR) is disordered.

It belongs to the sirtuin family. Class I subfamily. Zn(2+) is required as a cofactor.

Its subcellular location is the cytoplasm. The protein localises to the nucleus. It carries out the reaction N(6)-acetyl-L-lysyl-[protein] + NAD(+) + H2O = 2''-O-acetyl-ADP-D-ribose + nicotinamide + L-lysyl-[protein]. Functionally, NAD-dependent histone deacetylase, which could function in telomeric silencing, cell cycle progression and chromosome stability. In Emericella nidulans (strain FGSC A4 / ATCC 38163 / CBS 112.46 / NRRL 194 / M139) (Aspergillus nidulans), this protein is NAD-dependent protein deacetylase hst2-1.